Consider the following 346-residue polypeptide: Pyrophosphate--fructose 6-phosphate 1-phosphotransferase (346 aa).

Gly13 is a diphosphate binding site. Glu105 contributes to the Mg(2+) binding site. Substrate-binding positions include 127–129 (TID), Arg164, 171–173 (MGR), Glu224, Arg269, and 275–278 (HLQR). Asp129 serves as the catalytic Proton acceptor.

The protein belongs to the phosphofructokinase type A (PFKA) family. Mixed-substrate PFK group III subfamily. Homodimer. Mg(2+) is required as a cofactor.

It is found in the cytoplasm. It catalyses the reaction beta-D-fructose 6-phosphate + diphosphate = beta-D-fructose 1,6-bisphosphate + phosphate + H(+). It participates in carbohydrate degradation; glycolysis; D-glyceraldehyde 3-phosphate and glycerone phosphate from D-glucose: step 3/4. Non-allosteric. Its function is as follows. Catalyzes the phosphorylation of D-fructose 6-phosphate, the first committing step of glycolysis. Uses inorganic phosphate (PPi) as phosphoryl donor instead of ATP like common ATP-dependent phosphofructokinases (ATP-PFKs), which renders the reaction reversible, and can thus function both in glycolysis and gluconeogenesis. Consistently, PPi-PFK can replace the enzymes of both the forward (ATP-PFK) and reverse (fructose-bisphosphatase (FBPase)) reactions. This chain is Pyrophosphate--fructose 6-phosphate 1-phosphotransferase, found in Dictyoglomus thermophilum.